The chain runs to 44 residues: Photosystem I reaction center subunit IX (44 aa).

Residues 7–27 form a helical membrane-spanning segment; the sequence is YLSTAPVLATLWFSSLAGLLI.

This sequence belongs to the PsaJ family.

It localises to the plastid. The protein localises to the chloroplast thylakoid membrane. In terms of biological role, may help in the organization of the PsaE and PsaF subunits. This Welwitschia mirabilis (Tree tumbo) protein is Photosystem I reaction center subunit IX.